We begin with the raw amino-acid sequence, 78 residues long: Large ribosomal subunit protein bL28 (78 aa).

A disordered region spans residues 1–29; sequence MSAHCQVTGRKPSFGKSVSHSHRRTSRRW.

The protein belongs to the bacterial ribosomal protein bL28 family.

The chain is Large ribosomal subunit protein bL28 from Corynebacterium glutamicum (strain ATCC 13032 / DSM 20300 / JCM 1318 / BCRC 11384 / CCUG 27702 / LMG 3730 / NBRC 12168 / NCIMB 10025 / NRRL B-2784 / 534).